A 417-amino-acid polypeptide reads, in one-letter code: D-amino acid dehydrogenase (417 aa).

3–17 (VIVIGSGVIGLTSAW) serves as a coordination point for FAD.

This sequence belongs to the DadA oxidoreductase family. Requires FAD as cofactor.

The enzyme catalyses a D-alpha-amino acid + A + H2O = a 2-oxocarboxylate + AH2 + NH4(+). Its pathway is amino-acid degradation; D-alanine degradation; NH(3) and pyruvate from D-alanine: step 1/1. Oxidative deamination of D-amino acids. This is D-amino acid dehydrogenase from Vibrio atlanticus (strain LGP32) (Vibrio splendidus (strain Mel32)).